The following is a 70-amino-acid chain: Large ribosomal subunit protein uL29 (70 aa).

The protein belongs to the universal ribosomal protein uL29 family.

This is Large ribosomal subunit protein uL29 from Prochlorococcus marinus (strain MIT 9211).